We begin with the raw amino-acid sequence, 161 residues long: RNA pyrophosphohydrolase (161 aa).

One can recognise a Nudix hydrolase domain in the interval 12-154 (PYRPGVGMMI…KRKLYQAVVK (143 aa)). A Nudix box motif is present at residues 46 to 67 (GGIVPGETPSIAAMREMLEEIG).

It belongs to the Nudix hydrolase family. RppH subfamily. A divalent metal cation serves as cofactor.

Functionally, accelerates the degradation of transcripts by removing pyrophosphate from the 5'-end of triphosphorylated RNA, leading to a more labile monophosphorylated state that can stimulate subsequent ribonuclease cleavage. This is RNA pyrophosphohydrolase from Rickettsia typhi (strain ATCC VR-144 / Wilmington).